The sequence spans 496 residues: Legumin (496 aa).

The N-terminal stretch at 1–21 is a signal peptide; it reads MAKLLALSLSFCFLLFGTCFA. 2 disulfide bridges follow: Cys31–Cys64 and Cys107–Cys318. The Cupin type-1 1 domain occupies 36–230; it reads LNALKPDNRI…ALNVNRRIVN (195 aa). Residues 240-311 are disordered; it reads EKGAIVKVKG…RGGSKSQRDN (72 aa). Over residues 257–269 the composition is skewed to basic and acidic residues; that stretch reads PEKEPRQKRGSRQ. The Cupin type-1 2 domain occupies 324-453; sequence QNIGSSSSPD…INVCQKKLLQ (130 aa).

This sequence belongs to the 11S seed storage protein (globulins) family. In terms of assembly, hexamer; each subunit is composed of an acidic and a basic chain derived from a single precursor and linked by a disulfide bond.

Seed storage protein. Alpha-amylase inhibitor. This is Legumin from Cicer arietinum (Chickpea).